Consider the following 286-residue polypeptide: Glycine--tRNA ligase alpha subunit (286 aa).

This sequence belongs to the class-II aminoacyl-tRNA synthetase family. In terms of assembly, tetramer of two alpha and two beta subunits.

Its subcellular location is the cytoplasm. It catalyses the reaction tRNA(Gly) + glycine + ATP = glycyl-tRNA(Gly) + AMP + diphosphate. In Thermotoga sp. (strain RQ2), this protein is Glycine--tRNA ligase alpha subunit.